Reading from the N-terminus, the 345-residue chain is Phosphoribosylformylglycinamidine cyclo-ligase (345 aa).

The protein belongs to the AIR synthase family.

It is found in the cytoplasm. It catalyses the reaction 2-formamido-N(1)-(5-O-phospho-beta-D-ribosyl)acetamidine + ATP = 5-amino-1-(5-phospho-beta-D-ribosyl)imidazole + ADP + phosphate + H(+). It participates in purine metabolism; IMP biosynthesis via de novo pathway; 5-amino-1-(5-phospho-D-ribosyl)imidazole from N(2)-formyl-N(1)-(5-phospho-D-ribosyl)glycinamide: step 2/2. In Pectobacterium atrosepticum (strain SCRI 1043 / ATCC BAA-672) (Erwinia carotovora subsp. atroseptica), this protein is Phosphoribosylformylglycinamidine cyclo-ligase.